The primary structure comprises 711 residues: DNA topoisomerase 3 (711 aa).

The 134-residue stretch at 2–135 folds into the Toprim domain; sequence KSLILAEKPS…IRRLWISSVT (134 aa). Residues E8 and D104 each coordinate Mg(2+). One can recognise a Topo IA-type catalytic domain in the interval 152–580; sequence YNDLYYAALA…EMKDFTKDVV (429 aa). The tract at residues 186–191 is interaction with DNA; the sequence is SLGRVQ. The O-(5'-phospho-DNA)-tyrosine intermediate role is filled by Y305. The disordered stretch occupies residues 691-711; that stretch reads MNKNEGLDNNPFKDALKNLNL.

The protein belongs to the type IA topoisomerase family. The cofactor is Mg(2+).

It catalyses the reaction ATP-independent breakage of single-stranded DNA, followed by passage and rejoining.. Releases the supercoiling and torsional tension of DNA, which is introduced during the DNA replication and transcription, by transiently cleaving and rejoining one strand of the DNA duplex. Introduces a single-strand break via transesterification at a target site in duplex DNA. The scissile phosphodiester is attacked by the catalytic tyrosine of the enzyme, resulting in the formation of a DNA-(5'-phosphotyrosyl)-enzyme intermediate and the expulsion of a 3'-OH DNA strand. The free DNA strand then undergoes passage around the unbroken strand, thus removing DNA supercoils. Finally, in the religation step, the DNA 3'-OH attacks the covalent intermediate to expel the active-site tyrosine and restore the DNA phosphodiester backbone. The polypeptide is DNA topoisomerase 3 (Staphylococcus aureus (strain NCTC 8325 / PS 47)).